Here is a 461-residue protein sequence, read N- to C-terminus: Bifunctional protein GlmU (461 aa).

Residues 1–235 are pyrophosphorylase; sequence MTDTRKQRAA…EDDLIGCDSK (235 aa). UDP-N-acetyl-alpha-D-glucosamine contacts are provided by residues 13 to 16, Lys27, Gln80, 85 to 86, 108 to 110, Gly146, Glu161, and Asn176; these read LAAG, GT, and YGD. Asp110 is a Mg(2+) binding site. Positions 236–256 are linker; sequence ADLAEAEAIFQQKRRRALMEA. Residues 257-461 are N-acetyltransferase; it reads GVTMVAPETV…ARTTDQNKKG (205 aa). UDP-N-acetyl-alpha-D-glucosamine is bound by residues Arg322 and Lys340. His352 serves as the catalytic Proton acceptor. Tyr355 and Asn366 together coordinate UDP-N-acetyl-alpha-D-glucosamine. Residues Ala369, 375-376, Ser394, Ser412, and Arg429 each bind acetyl-CoA; that span reads NY.

The protein in the N-terminal section; belongs to the N-acetylglucosamine-1-phosphate uridyltransferase family. In the C-terminal section; belongs to the transferase hexapeptide repeat family. In terms of assembly, homotrimer. The cofactor is Mg(2+).

It is found in the cytoplasm. It catalyses the reaction alpha-D-glucosamine 1-phosphate + acetyl-CoA = N-acetyl-alpha-D-glucosamine 1-phosphate + CoA + H(+). The enzyme catalyses N-acetyl-alpha-D-glucosamine 1-phosphate + UTP + H(+) = UDP-N-acetyl-alpha-D-glucosamine + diphosphate. The protein operates within nucleotide-sugar biosynthesis; UDP-N-acetyl-alpha-D-glucosamine biosynthesis; N-acetyl-alpha-D-glucosamine 1-phosphate from alpha-D-glucosamine 6-phosphate (route II): step 2/2. Its pathway is nucleotide-sugar biosynthesis; UDP-N-acetyl-alpha-D-glucosamine biosynthesis; UDP-N-acetyl-alpha-D-glucosamine from N-acetyl-alpha-D-glucosamine 1-phosphate: step 1/1. It functions in the pathway bacterial outer membrane biogenesis; LPS lipid A biosynthesis. Functionally, catalyzes the last two sequential reactions in the de novo biosynthetic pathway for UDP-N-acetylglucosamine (UDP-GlcNAc). The C-terminal domain catalyzes the transfer of acetyl group from acetyl coenzyme A to glucosamine-1-phosphate (GlcN-1-P) to produce N-acetylglucosamine-1-phosphate (GlcNAc-1-P), which is converted into UDP-GlcNAc by the transfer of uridine 5-monophosphate (from uridine 5-triphosphate), a reaction catalyzed by the N-terminal domain. The protein is Bifunctional protein GlmU of Hyphomonas neptunium (strain ATCC 15444).